The following is a 261-amino-acid chain: 3-deoxy-manno-octulosonate cytidylyltransferase 1 (261 aa).

The protein belongs to the KdsB family.

Its subcellular location is the cytoplasm. It carries out the reaction 3-deoxy-alpha-D-manno-oct-2-ulosonate + CTP = CMP-3-deoxy-beta-D-manno-octulosonate + diphosphate. Its pathway is nucleotide-sugar biosynthesis; CMP-3-deoxy-D-manno-octulosonate biosynthesis; CMP-3-deoxy-D-manno-octulosonate from 3-deoxy-D-manno-octulosonate and CTP: step 1/1. It participates in bacterial outer membrane biogenesis; lipopolysaccharide biosynthesis. In terms of biological role, activates KDO (a required 8-carbon sugar) for incorporation into bacterial lipopolysaccharide in Gram-negative bacteria. The protein is 3-deoxy-manno-octulosonate cytidylyltransferase 1 of Burkholderia lata (strain ATCC 17760 / DSM 23089 / LMG 22485 / NCIMB 9086 / R18194 / 383).